Reading from the N-terminus, the 401-residue chain is MAENAGNETKLVENENLQEDLSRLNLEDEKNELKLNEKGGVLKENDEHLECSESFKKLAEKEEAYQTLKNSYNSLKQQHSNLLGKVSGIKSTLGERLKKDSQELAQNRKRIQELEKSLGDAEEALKLSNEETVTLTAQVESLTQDITDLRQQNASLVEENQLLSTQSKQWERRARDEHEMQESLAVRLADCEEQLARETERQEQYEVEIQRHLTNQHQLEIELESTKASHTENLGELTRNWQKAMDDVTEKFASKSKEYEDLQNELDATQKRLSRVSDLEHEVKEKTLLIGKLQHEAVVLNEHLTKALCMLKDGNNAEKIDKQLISNLFVSFLTLPRADTKRFEILQLISSVLDWNDTQREQTGLQRPGSSVNNWSIPHSASSNSLFSDHSFSKRRSFHDS.

Positions 7-296 (NETKLVENEN…TLLIGKLQHE (290 aa)) form a coiled coil. One can recognise a GRIP domain in the interval 315–366 (NNAEKIDKQLISNLFVSFLTLPRADTKRFEILQLISSVLDWNDTQREQTGLQ).

The protein resides in the golgi apparatus lumen. The protein is GRIP domain-containing protein C119.12 of Schizosaccharomyces pombe (strain 972 / ATCC 24843) (Fission yeast).